Consider the following 97-residue polypeptide: U-reduvitoxin-Pr11a (97 aa).

Positions 1–20 (MKTALFLVFALAFIAVEGKM) are cleaved as a signal peptide. Pacifastin domains are found at residues 22-59 (RACS…CPPR) and 62-97 (EKSC…KLCL). 3 disulfides stabilise this stretch: cysteine 24–cysteine 42, cysteine 37–cysteine 56, and cysteine 40–cysteine 51. The interval 57-59 (PPR) is pro-Pro-Arg motif necessary for proteolytic processing. Disulfide bonds link cysteine 65–cysteine 82, cysteine 77–cysteine 96, and cysteine 80–cysteine 91.

The protein belongs to the protease inhibitor I19 family. As to expression, expressed by the venom gland.

It localises to the secreted. Inhibits trypsin activity and prophenoloxidase (PPO) activation, an enzyme essential for both clotting and insect innate immune responses. It does not inhibit activity of chymotrypsin and protease K, and has no effect on phenoloxidase (PO) activity. The sequence is that of U-reduvitoxin-Pr11a from Platymeris rhadamanthus (Red spot assassin bug).